Reading from the N-terminus, the 103-residue chain is Major carboxysome shell protein CsoS1 (103 aa).

In terms of domain architecture, BMC spans 9–94; the sequence is ALGMIETRGL…PHREVEPALG (86 aa).

It belongs to the bacterial microcompartments protein family. CsoS1 subfamily. As to quaternary structure, homohexamer with a small central pore. A CsoS1-CsoS1D-CsoS2 complex can be isolated following expression in E.coli. Forms a CsoS2-CsoS1-RuBisCO complex.

The protein resides in the carboxysome. Its function is as follows. The major shell protein of the carboxysome, a polyhedral inclusion where RuBisCO (ribulose bisphosphate carboxylase, ccbL-ccbS) is sequestered. Assembles into hexamers which make sheets that form the facets of the polyhedral carboxysome. There are estimated to be 538 CsoS1 hexamers per carboxysome; note this number includes the probable carboxysome shell vertex proteins CsoS4A and CsoS4B. The protein is Major carboxysome shell protein CsoS1 of Prochlorococcus marinus subsp. pastoris (strain CCMP1986 / NIES-2087 / MED4).